The sequence spans 239 residues: Putative zinc finger protein 132L (239 aa).

The disordered stretch occupies residues 20–40; it reads DASLSTKSPKREPSQEKEIKK. The segment covering 28 to 40 has biased composition (basic and acidic residues); it reads PKREPSQEKEIKK. 2 C3H1-type zinc fingers span residues 44–68 and 81–106; these read IKKN…HPGE and RRKT…HDES. A disordered region spans residues 128–151; it reads PGECKFSHPPPPPPSPPSPPPKEE. Over residues 135-147 the composition is skewed to pro residues; that stretch reads HPPPPPPSPPSPP.

This Acheta domesticus (House cricket) protein is Putative zinc finger protein 132L.